The following is a 159-amino-acid chain: Phosphopantetheine adenylyltransferase (159 aa).

Ser-9 is a binding site for substrate. ATP contacts are provided by residues 9-10 (SF) and His-17. Lys-41, Leu-73, and Lys-87 together coordinate substrate. ATP contacts are provided by residues 88–90 (GLR), Glu-98, and 122–128 (YSFLSSS).

Belongs to the bacterial CoaD family. As to quaternary structure, homohexamer. Mg(2+) serves as cofactor.

The protein resides in the cytoplasm. The enzyme catalyses (R)-4'-phosphopantetheine + ATP + H(+) = 3'-dephospho-CoA + diphosphate. Its pathway is cofactor biosynthesis; coenzyme A biosynthesis; CoA from (R)-pantothenate: step 4/5. In terms of biological role, reversibly transfers an adenylyl group from ATP to 4'-phosphopantetheine, yielding dephospho-CoA (dPCoA) and pyrophosphate. In Streptomyces coelicolor (strain ATCC BAA-471 / A3(2) / M145), this protein is Phosphopantetheine adenylyltransferase.